The chain runs to 151 residues: MSTPDNRSVNFFSLFRRGQHYSKTWPLEKRLAPVFVENRVIKMTRYAIRFMPPIAVFTLCWQIALGGLLGPAVATALFALSLPMQGLWWLGKRSVTPLPPAILNWFYEVRGKLQESGQVLAPVEGKPDYQALADTLKRAFKQLDKTFLDDL.

The next 2 membrane-spanning stretches (helical) occupy residues 46 to 65 (YAIR…QIAL) and 69 to 91 (LGPA…WWLG).

Belongs to the UPF0208 family.

It is found in the cell inner membrane. The sequence is that of UPF0208 membrane protein YfbV from Shigella flexneri serotype 5b (strain 8401).